Here is a 356-residue protein sequence, read N- to C-terminus: D-amino-acid oxidase (356 aa).

The signal sequence occupies residues 1-17 (MAKIVVIGAGVAGLTTA). FAD contacts are provided by Ala-9, Ser-44, Gly-48, and Asn-50. Phe-54 is a binding site for anthranilate. Residue Val-171 coordinates FAD. Asn-192 is a glycosylation site (N-linked (GlcNAc...) asparagine). Tyr-243 contributes to the anthranilate binding site. (R)-lactate is bound at residue Tyr-243. N-linked (GlcNAc...) asparagine glycosylation is present at Asn-262. Arg-302, Ala-329, Gly-332, Tyr-333, and Gln-334 together coordinate FAD. Arg-302 contacts anthranilate. Residue Arg-302 coordinates (R)-lactate.

It belongs to the DAMOX/DASOX family. FAD is required as a cofactor.

The protein resides in the peroxisome matrix. The catalysed reaction is a D-alpha-amino acid + O2 + H2O = a 2-oxocarboxylate + H2O2 + NH4(+). It carries out the reaction D-alanine + O2 + H2O = pyruvate + H2O2 + NH4(+). It catalyses the reaction D-serine + O2 + H2O = 3-hydroxypyruvate + H2O2 + NH4(+). The enzyme catalyses D-phenylalanine + O2 + H2O = 3-phenylpyruvate + H2O2 + NH4(+). The catalysed reaction is D-lysine + O2 + H2O = 6-amino-2-oxohexanoate + H2O2 + NH4(+). It carries out the reaction D-tyrosine + O2 + H2O = 3-(4-hydroxyphenyl)pyruvate + H2O2 + NH4(+). It catalyses the reaction D-methionine + O2 + H2O = 4-methylsulfanyl-2-oxobutanoate + H2O2 + NH4(+). The enzyme catalyses D-tryptophan + O2 + H2O = indole-3-pyruvate + H2O2 + NH4(+). The catalysed reaction is D-leucine + O2 + H2O = 4-methyl-2-oxopentanoate + H2O2 + NH4(+). It carries out the reaction D-valine + O2 + H2O = 3-methyl-2-oxobutanoate + H2O2 + NH4(+). With respect to regulation, inhibited by benzoate and hypochlorite. Its function is as follows. Catalyzes the oxidative deamination of D-amino acids with broad substrate specificity. Enables the organism to utilize D-amino acids as a source of nutrients. This Trigonopsis variabilis (Yeast) protein is D-amino-acid oxidase.